Consider the following 335-residue polypeptide: N-acetylglucosaminyl-phosphatidylinositol de-N-acetylase (335 aa).

The chain crosses the membrane as a helical span at residues Ser-3–Leu-23. N-linked (GlcNAc...) asparagine glycans are attached at residues Asn-128 and Asn-153.

It belongs to the PIGL family.

It is found in the endoplasmic reticulum membrane. It catalyses the reaction a 6-(N-acetyl-alpha-D-glucosaminyl)-1-(1,2-diacyl-sn-glycero-3-phospho)-1D-myo-inositol + H2O = a 6-(alpha-D-glucosaminyl)-1-(1,2-diacyl-sn-glycero-3-phospho)-1D-myo-inositol + acetate. Its pathway is glycolipid biosynthesis; glycosylphosphatidylinositol-anchor biosynthesis. Its function is as follows. Involved in the second step of GPI biosynthesis. De-N-acetylation of N-acetylglucosaminyl-phosphatidylinositol. In Arthroderma benhamiae (strain ATCC MYA-4681 / CBS 112371) (Trichophyton mentagrophytes), this protein is N-acetylglucosaminyl-phosphatidylinositol de-N-acetylase.